The sequence spans 248 residues: ATP synthase subunit a, chloroplastic (248 aa).

A run of 4 helical transmembrane segments spans residues 34–54 (LHGQ…IFAL), 95–115 (VPYI…GALI), 134–154 (INVT…AGIS), and 203–223 (VFAL…GLFA).

It belongs to the ATPase A chain family. In terms of assembly, F-type ATPases have 2 components, CF(1) - the catalytic core - and CF(0) - the membrane proton channel. CF(1) has five subunits: alpha(3), beta(3), gamma(1), delta(1), epsilon(1). CF(0) has four main subunits: a, b, b' and c.

The protein resides in the plastid. The protein localises to the chloroplast thylakoid membrane. Its function is as follows. Key component of the proton channel; it plays a direct role in the translocation of protons across the membrane. The sequence is that of ATP synthase subunit a, chloroplastic from Guillardia theta (Cryptophyte).